The chain runs to 330 residues: Zinc finger Ran-binding domain-containing protein 2 (330 aa).

Ser9 is modified (phosphoserine). Residues 9 to 40 (SDGDWICPDKKCGNVNFARRTSCNRCGREKTT) form a RanBP2-type 1 zinc finger. An N6-acetyllysine mark is found at Lys18, Lys54, and Lys92. The segment at 65 to 94 (SANDWQCKTCSNVNWARRSECNMCNTPKYA) adopts a RanBP2-type 2 zinc-finger fold. A disordered region spans residues 117–330 (REESDGEYDE…SGSRSSSKKK (214 aa)). A phosphoserine mark is found at Ser120, Ser153, Ser181, Ser188, and Ser193. Residues 150–163 (DKESEGEEEDEDED) are compositionally biased toward acidic residues. The segment at 151 to 324 (KESEGEEEDE…SSGSSHSGSR (174 aa)) is required for nuclear targeting. Over residues 196-210 (KKSNRRSRSKSRSSH) the composition is skewed to basic residues. Composition is skewed to low complexity over residues 211 to 224 (SRSS…SSSR) and 232 to 242 (RSSSSSQSRSR). 2 stretches are compositionally biased toward basic residues: residues 251–273 (SRGS…RKRS) and 298–314 (RKKR…RHRS). Thr303 carries the phosphothreonine modification. A phosphoserine mark is found at Ser305, Ser307, and Arg310. The span at 315–330 (SSGSSHSGSRSSSKKK) shows a compositional bias: low complexity.

This sequence belongs to the ZRANB2 family. In terms of assembly, interacts with the C-terminal half of SNRNP70, the Arg/Ser-rich domain of AKAP17A as well as with U2AF1 and CLK1. In terms of processing, isoform 2 is phosphorylated on Ser-310 upon DNA damage, probably by ATM or ATR.

It localises to the nucleus. Its function is as follows. Splice factor required for alternative splicing of TRA2B/SFRS10 transcripts. Binds to ssRNA containing the consensus sequence 5'-AGGUAA-3'. May interfere with constitutive 5'-splice site selection. The polypeptide is Zinc finger Ran-binding domain-containing protein 2 (ZRANB2) (Homo sapiens (Human)).